The primary structure comprises 287 residues: Protein PXR1 (287 aa).

A G-patch domain is found at 25-72 (TSRFGHLQLEKFGWKPGMGLGMSPTSSHKTHIKVSIKDDNLGLGAKIK). Residues 143 to 155 (LKSYSNDKKRSRD) show a composition bias toward basic and acidic residues. The tract at residues 143 to 254 (LKSYSNDKKR…TTASNIPSTV (112 aa)) is disordered. A compositionally biased stretch (basic residues) spans 163-190 (SKNKSKKQKKDKKDKKDKKDKKDKKDKK). Over residues 191 to 200 (DKKDKTEKKE) the composition is skewed to basic and acidic residues. Positions 201–220 (KKEKKEKKEKKEKKDKKDKK) are enriched in basic residues. Residues 221 to 230 (DKKDKIDKKD) show a composition bias toward basic and acidic residues. A compositionally biased stretch (polar residues) spans 239 to 251 (NNIEVSTTASNIP).

Belongs to the PINX1 family.

The protein resides in the nucleus. It localises to the nucleolus. Functionally, involved in rRNA-processing at A0, A1 and A2 sites and negatively regulates telomerase. The protein is Protein PXR1 (PXR1) of Vanderwaltozyma polyspora (strain ATCC 22028 / DSM 70294 / BCRC 21397 / CBS 2163 / NBRC 10782 / NRRL Y-8283 / UCD 57-17) (Kluyveromyces polysporus).